The primary structure comprises 268 residues: Ribosomal RNA large subunit methyltransferase E (268 aa).

The segment at 1 to 60 (MKPPRSRSGSSKDTGPKRIPGKALKSASNPGENDATLDSATARTARNKTVSLRTARGRTT) is disordered. Polar residues predominate over residues 26 to 52 (SASNPGENDATLDSATARTARNKTVSL). Positions 115, 117, 133, 149, and 173 each coordinate S-adenosyl-L-methionine. Lys-213 serves as the catalytic Proton acceptor.

It belongs to the class I-like SAM-binding methyltransferase superfamily. RNA methyltransferase RlmE family.

The protein localises to the cytoplasm. The catalysed reaction is uridine(2552) in 23S rRNA + S-adenosyl-L-methionine = 2'-O-methyluridine(2552) in 23S rRNA + S-adenosyl-L-homocysteine + H(+). In terms of biological role, specifically methylates the uridine in position 2552 of 23S rRNA at the 2'-O position of the ribose in the fully assembled 50S ribosomal subunit. This is Ribosomal RNA large subunit methyltransferase E from Gluconobacter oxydans (strain 621H) (Gluconobacter suboxydans).